The sequence spans 609 residues: Glutamine--fructose-6-phosphate aminotransferase [isomerizing] (609 aa).

The Nucleophile; for GATase activity role is filled by Cys2. Residues 2–219 (CGIFGYIGAK…SGELAVVGLG (218 aa)) enclose the Glutamine amidotransferase type-2 domain. 2 consecutive SIS domains span residues 280–426 (ISEK…LKQT) and 458–599 (WAND…IDRP). Residue Lys604 is the For Fru-6P isomerization activity of the active site.

In terms of assembly, homodimer.

The protein localises to the cytoplasm. It catalyses the reaction D-fructose 6-phosphate + L-glutamine = D-glucosamine 6-phosphate + L-glutamate. In terms of biological role, catalyzes the first step in hexosamine metabolism, converting fructose-6P into glucosamine-6P using glutamine as a nitrogen source. This chain is Glutamine--fructose-6-phosphate aminotransferase [isomerizing], found in Chlamydia caviae (strain ATCC VR-813 / DSM 19441 / 03DC25 / GPIC) (Chlamydophila caviae).